The chain runs to 168 residues: Mitochondrial import inner membrane translocase subunit TIM14 (168 aa).

The span at 1–12 shows a compositional bias: polar residues; that stretch reads MSSQSNTGNSIE. The segment at 1-29 is disordered; it reads MSSQSNTGNSIEAPQLPIPGQTNGSANVT. Topologically, residues 1–65 are mitochondrial intermembrane; sequence MSSQSNTGNS…QALNYMGEHP (65 aa). The helical transmembrane segment at 66–83 threads the bilayer; sequence VITGFGAFLTLYFTAGAY. The Mitochondrial matrix portion of the chain corresponds to 84–168; it reads KSISKGLNGG…DFLEKRGISK (85 aa). In terms of domain architecture, J spans 112–168; that stretch reads EALQILNLTENTLTKKKLKEVHRKIMLANHPDKGGSPFLATKINEAKDFLEKRGISK.

The protein belongs to the TIM14 family. In terms of assembly, homodimer and heterodimer with PAM16/TIM16. Homodimerization may not be relevant in vivo, while heterodimerization is essential for activity regulation of mtHSP70. Component of the PAM complex, at least composed of mtHsp70, MGE1, TIM44, PAM16, PAM17 and PAM18/TIM14. Interacts directly with mtHsp70. Interacts directly with TIM17 subunit of the TIM23 complex.

It is found in the mitochondrion inner membrane. Essential component of the PAM complex, a complex required for the translocation of transit peptide-containing proteins from the inner membrane into the mitochondrial matrix in an ATP-dependent manner. In the complex, it is required to stimulate activity of mtHSP70 (SSC1). This chain is Mitochondrial import inner membrane translocase subunit TIM14 (PAM18), found in Saccharomyces cerevisiae (strain ATCC 204508 / S288c) (Baker's yeast).